Consider the following 765-residue polypeptide: uncharacterized protein (765 aa).

Disordered regions lie at residues 9-61, 128-164, 265-289, 301-373, 409-526, 540-560, and 668-765; these read NDGN…PSSV, QQQQ…NYTS, TTSS…NITT, WTTT…TYIQ, IGNN…NQSN, PTKK…KYSE, and NSNT…KSRI. Composition is skewed to low complexity over residues 40 to 61 and 143 to 161; these read SNNI…PSSV and SNKS…NNNN. Composition is skewed to low complexity over residues 301-311, 325-344, 353-373, 414-428, 438-485, 495-504, and 513-526; these read WTTTKPTSSTK, YDSP…STSS, IQPT…TYIQ, SNHT…SLST, NNNN…INNN, DNQSSYSSPD, and SQQQ…NQSN. Low complexity predominate over residues 668–745; the sequence is NSNTDNYNYY…NNSRNNYNNN (78 aa).

This is an uncharacterized protein from Dictyostelium discoideum (Social amoeba).